We begin with the raw amino-acid sequence, 220 residues long: Uracil-DNA glycosylase (220 aa).

D65 (proton acceptor) is an active-site residue.

The protein belongs to the uracil-DNA glycosylase (UDG) superfamily. UNG family.

The protein resides in the cytoplasm. The catalysed reaction is Hydrolyzes single-stranded DNA or mismatched double-stranded DNA and polynucleotides, releasing free uracil.. Excises uracil residues from the DNA which can arise as a result of misincorporation of dUMP residues by DNA polymerase or due to deamination of cytosine. This Phocaeicola vulgatus (strain ATCC 8482 / DSM 1447 / JCM 5826 / CCUG 4940 / NBRC 14291 / NCTC 11154) (Bacteroides vulgatus) protein is Uracil-DNA glycosylase.